The sequence spans 113 residues: Kita-kyushu lung cancer antigen 1 (113 aa).

Topologically, residues 1–3 (MNF) are cytoplasmic. Residues 4–21 (YLLLASSILCALIVFWKY) form a helical; Signal-anchor for type II membrane protein membrane-spanning segment. At 22-113 (RRFQRNTGEM…RGASPHRKST (92 aa)) the chain is on the extracellular side. An N-linked (GlcNAc...) asparagine glycan is attached at Asn83.

In terms of tissue distribution, specifically expressed in testis. Expressed by cancer cell lines.

It localises to the cell membrane. In Homo sapiens (Human), this protein is Kita-kyushu lung cancer antigen 1 (CT83).